The sequence spans 158 residues: Transcription elongation factor GreA (158 aa).

A coiled-coil region spans residues 45–72 (AEYHAAREQQSFIEGRIKQLEGELSHAE).

This sequence belongs to the GreA/GreB family.

In terms of biological role, necessary for efficient RNA polymerase transcription elongation past template-encoded arresting sites. The arresting sites in DNA have the property of trapping a certain fraction of elongating RNA polymerases that pass through, resulting in locked ternary complexes. Cleavage of the nascent transcript by cleavage factors such as GreA or GreB allows the resumption of elongation from the new 3'terminus. GreA releases sequences of 2 to 3 nucleotides. The polypeptide is Transcription elongation factor GreA (Xanthomonas campestris pv. campestris (strain ATCC 33913 / DSM 3586 / NCPPB 528 / LMG 568 / P 25)).